The chain runs to 192 residues: Glycerol-3-phosphate acyltransferase (192 aa).

The next 5 helical transmembrane spans lie at 4–24, 54–74, 80–100, 112–132, and 154–174; these read MFWLLATFAYLLGSLSFAILL, LAVLTLLGDLCKGLIPVVLAG, PSQQGWIGVCAVLGHLFPLYF, AGVLLGLYPPAAALAIAAWLL, and LLAWQEPHALLPMSVLTLLIV.

Belongs to the PlsY family. Probably interacts with PlsX.

It localises to the cell inner membrane. It catalyses the reaction an acyl phosphate + sn-glycerol 3-phosphate = a 1-acyl-sn-glycero-3-phosphate + phosphate. The protein operates within lipid metabolism; phospholipid metabolism. Catalyzes the transfer of an acyl group from acyl-phosphate (acyl-PO(4)) to glycerol-3-phosphate (G3P) to form lysophosphatidic acid (LPA). This enzyme utilizes acyl-phosphate as fatty acyl donor, but not acyl-CoA or acyl-ACP. In Pseudomonas syringae pv. tomato (strain ATCC BAA-871 / DC3000), this protein is Glycerol-3-phosphate acyltransferase.